Consider the following 313-residue polypeptide: tRNA(Ile)-lysidine synthase (313 aa).

ATP is bound at residue 37–42; it reads SGGPDS.

This sequence belongs to the tRNA(Ile)-lysidine synthase family.

The protein resides in the cytoplasm. The catalysed reaction is cytidine(34) in tRNA(Ile2) + L-lysine + ATP = lysidine(34) in tRNA(Ile2) + AMP + diphosphate + H(+). In terms of biological role, ligates lysine onto the cytidine present at position 34 of the AUA codon-specific tRNA(Ile) that contains the anticodon CAU, in an ATP-dependent manner. Cytidine is converted to lysidine, thus changing the amino acid specificity of the tRNA from methionine to isoleucine. This chain is tRNA(Ile)-lysidine synthase, found in Corynebacterium efficiens (strain DSM 44549 / YS-314 / AJ 12310 / JCM 11189 / NBRC 100395).